A 118-amino-acid polypeptide reads, in one-letter code: Small ribosomal subunit protein uS13 (118 aa).

The tract at residues 94–118 (GLPVRGQRTKTNARTRKGPRKPIKK) is disordered.

The protein belongs to the universal ribosomal protein uS13 family. As to quaternary structure, part of the 30S ribosomal subunit. Forms a loose heterodimer with protein S19. Forms two bridges to the 50S subunit in the 70S ribosome.

Functionally, located at the top of the head of the 30S subunit, it contacts several helices of the 16S rRNA. In the 70S ribosome it contacts the 23S rRNA (bridge B1a) and protein L5 of the 50S subunit (bridge B1b), connecting the 2 subunits; these bridges are implicated in subunit movement. Contacts the tRNAs in the A and P-sites. The sequence is that of Small ribosomal subunit protein uS13 from Histophilus somni (strain 129Pt) (Haemophilus somnus).